We begin with the raw amino-acid sequence, 1068 residues long: MEQQQSKNNAHVSKLFVCTAVDCKDDIEEKFERSFLTLQMQISGLSDKEMHDMLSQAVCKEKQHEDISIGFLYIMLTDPSMASKTYRDVTLVSRDGMNGIVTNLTFLVAEKYTKLTEVARRQLIWLLREFVKHQVLSVENVIWNCLRQAGGGDVSSRNLFLIESLLDIFIEFRTWLESNPFLVQSTVYSFVRLIEDHANPALLSLRQKEVKFTISLIRERFHDIIPLGRDFVRLLQNVARIPEFEQLWRDILFNPKMLHQTFNGIWQLLHIRTSRRFLQCRLLPEMERKISFLASSVKFGNQKRYQDWFQDKYFATPESHSLRSDLIRFIINVIHPTNDMLCSDIIPRWAIIGWLISSCTNPIASANAKLSLFYDWLFFDPAKDNIMNIEPGILVMYHSIRNHPFVSSTLLDFLCRITKNFFVKHEDKIRIGVYNSLKLILEKQVIPNLQPLFESPKLDRELRNLIRDNFREFLSPPANLGQLLYTSLHPVQGHILKIESDQRILHCENVDLHETGLINISGTVDEDKKISLVPTDQEIESVFSGETAENLRRVHNIEDNTDDDDDLPLSEVRLKEKPKVELAEAIAESFDAFVTKRNSYTWEAFLKDFRPLPASAFEEFQLNYVISNTVLILRETLPQQNIFSESKTEEKHLAKSISYPLYGLFRFLYENDEKSKKPFQTLLSEICEGIPEIGYLLLYFMKIYCKLQTRKNSQQSYQFKTTIYRQICDAADEKIGHCLLRDLDLLEKENTNIFLWLLPDIYREFKSIATNNTDILRITLRCIDAKNVRDILYSVAQGKLTIFKQDGLIDCIRQSLEFETYEQFCLWQIVQAHDVPLRCIQDILPELEAGSHPEALSHFLLLLKNEEPTNEIIRLMLSRESKSKGDPFVTSVLRFWCQRYEEKLSEIIASLLTSKYPSSSPNKRKRPPKGISVSTSTPSADQVLNHLEHYRRSCRHGTGTGLYVHDMMQRALQSAYSHSNDSTKKQFCDLFALAAEEDTTVGRRGGSGRGRKQPGSKKDVNNHGTSKKNAEMVKTIYSSDDNSSEEDWSKSKILQTAKRRKKANNDSD.

Disordered regions lie at residues 916–939 and 1001–1068; these read YPSS…STPS and VGRR…NDSD. Residues Ser1038, Ser1039, Ser1043, and Ser1044 each carry the phosphoserine modification.

The protein belongs to the Integrator subunit 3 family. In terms of assembly, belongs to the multiprotein complex Integrator, at least composed of IntS1, IntS2, IntS3, IntS4, omd/IntS5, IntS6, defl/IntS7, IntS8, IntS9, IntS10, IntS11, IntS12, asun/IntS13, IntS14 and IntS15. The core complex associates with protein phosphatase 2A subunits mts/PP2A and Pp2A-29B, to form the Integrator-PP2A (INTAC) complex.

The protein localises to the nucleus. It is found in the cytoplasm. In terms of biological role, component of the integrator complex, a multiprotein complex that terminates RNA polymerase II (Pol II) transcription in the promoter-proximal region of genes. The integrator complex provides a quality checkpoint during transcription elongation by driving premature transcription termination of transcripts that are unfavorably configured for transcriptional elongation: the complex terminates transcription by (1) catalyzing dephosphorylation of the C-terminal domain (CTD) of Pol II subunit Polr2A/Rbp1 and Spt5, and (2) degrading the exiting nascent RNA transcript via endonuclease activity. The integrator complex is also involved in the 3'-end processing of the U7 snRNA, and also the spliceosomal snRNAs U1, U2, U4 and U5. The chain is Integrator complex subunit 3 homolog (IntS3) from Drosophila sechellia (Fruit fly).